An 88-amino-acid chain; its full sequence is Small ribosomal subunit protein uS17 (88 aa).

It belongs to the universal ribosomal protein uS17 family. As to quaternary structure, part of the 30S ribosomal subunit.

One of the primary rRNA binding proteins, it binds specifically to the 5'-end of 16S ribosomal RNA. This Prochlorococcus marinus (strain MIT 9303) protein is Small ribosomal subunit protein uS17.